The primary structure comprises 152 residues: MDSKVVIYTDGACSGNPGPGGWGALLHFNDTSKKIFGYELVTTNNRMEMTAALEALRILKKSSVVEIYTDSKYLQHGITVWIHNWIKNNWCKSNNAPVKNADLWQKLYSELSKHTIMWKWVKGHASNSGNIAADKLAVQGRETAMEILKCLG.

The RNase H type-1 domain maps to 1–142 (MDSKVVIYTD…ADKLAVQGRE (142 aa)). Positions 10, 48, 70, and 134 each coordinate Mg(2+).

This sequence belongs to the RNase H family. In terms of assembly, monomer. Mg(2+) is required as a cofactor.

It localises to the cytoplasm. It catalyses the reaction Endonucleolytic cleavage to 5'-phosphomonoester.. In terms of biological role, endonuclease that specifically degrades the RNA of RNA-DNA hybrids. The chain is Ribonuclease HI (rnhA) from Rickettsia prowazekii (strain Madrid E).